The following is a 104-amino-acid chain: NADH-quinone oxidoreductase subunit K (104 aa).

Transmembrane regions (helical) follow at residues Val-4–Ala-24, Val-31–Phe-51, and Ile-64–Leu-84.

This sequence belongs to the complex I subunit 4L family. As to quaternary structure, NDH-1 is composed of 14 different subunits. Subunits NuoA, H, J, K, L, M, N constitute the membrane sector of the complex.

The protein resides in the cell membrane. The catalysed reaction is a quinone + NADH + 5 H(+)(in) = a quinol + NAD(+) + 4 H(+)(out). Functionally, NDH-1 shuttles electrons from NADH, via FMN and iron-sulfur (Fe-S) centers, to quinones in the respiratory chain. The immediate electron acceptor for the enzyme in this species is believed to be a menaquinone. Couples the redox reaction to proton translocation (for every two electrons transferred, four hydrogen ions are translocated across the cytoplasmic membrane), and thus conserves the redox energy in a proton gradient. The sequence is that of NADH-quinone oxidoreductase subunit K from Geobacillus sp. (strain WCH70).